The primary structure comprises 249 residues: Adapter protein MecA (249 aa).

Belongs to the MecA family. As to quaternary structure, homodimer.

Its function is as follows. Enables the recognition and targeting of unfolded and aggregated proteins to the ClpC protease or to other proteins involved in proteolysis. In Streptococcus thermophilus (strain ATCC BAA-250 / LMG 18311), this protein is Adapter protein MecA.